The primary structure comprises 150 residues: Transcription antitermination protein NusB (150 aa).

Belongs to the NusB family.

Involved in transcription antitermination. Required for transcription of ribosomal RNA (rRNA) genes. Binds specifically to the boxA antiterminator sequence of the ribosomal RNA (rrn) operons. The chain is Transcription antitermination protein NusB from Streptococcus pyogenes serotype M2 (strain MGAS10270).